A 430-amino-acid chain; its full sequence is Cytochrome c biogenesis protein CcsB (430 aa).

The next 3 helical transmembrane spans lie at 14–34, 72–92, and 162–182; these read LRLA…GTIL, SVWF…CSWR, and VGPL…AWGA.

Belongs to the Ccs1/CcsB family. May interact with CcsA.

The protein localises to the cellular thylakoid membrane. Its function is as follows. Required during biogenesis of c-type cytochromes (cytochrome c6 and cytochrome f) at the step of heme attachment. The sequence is that of Cytochrome c biogenesis protein CcsB from Synechococcus sp. (strain WH7803).